Reading from the N-terminus, the 122-residue chain is Fluoride-specific ion channel FluC 2 (122 aa).

4 helical membrane-spanning segments follow: residues 3 to 23 (ITAI…RMFI), 38 to 58 (TSIV…LNLT), 62 to 82 (LLLL…SFIY), and 93 to 113 (FMHL…CFYL). Residues Gly72 and Ser75 each contribute to the Na(+) site.

The protein belongs to the fluoride channel Fluc/FEX (TC 1.A.43) family.

The protein localises to the cell inner membrane. The catalysed reaction is fluoride(in) = fluoride(out). With respect to regulation, na(+) is not transported, but it plays an essential structural role and its presence is essential for fluoride channel function. Its function is as follows. Fluoride-specific ion channel. Important for reducing fluoride concentration in the cell, thus reducing its toxicity. The sequence is that of Fluoride-specific ion channel FluC 2 from Prochlorococcus marinus (strain MIT 9312).